We begin with the raw amino-acid sequence, 165 residues long: MRLTSKGRYAVTAMLDVALHSHEGPVPLADISERQGISLSYLEQLFSRLRKNGLVASVRGPGGGYLLGKAADAIAVGAVITAVDESVDATKCQGKEGCQGGERCLTHVLWRDLSERISDFLNNITLAELVNNQEILVVADRQNSNEIRRAPHGRMHETINVNLRA.

One can recognise an HTH rrf2-type domain in the interval 2–131; that stretch reads RLTSKGRYAV…NNITLAELVN (130 aa). Residues 28 to 51 constitute a DNA-binding region (H-T-H motif); the sequence is LADISERQGISLSYLEQLFSRLRK. [2Fe-2S] cluster contacts are provided by C92, C98, and C104.

It depends on [2Fe-2S] cluster as a cofactor.

Regulates the transcription of several operons and genes involved in the biogenesis of Fe-S clusters and Fe-S-containing proteins. The chain is HTH-type transcriptional regulator IscR from Erwinia tasmaniensis (strain DSM 17950 / CFBP 7177 / CIP 109463 / NCPPB 4357 / Et1/99).